The sequence spans 118 residues: Large ribosomal subunit protein bL19 (118 aa).

Belongs to the bacterial ribosomal protein bL19 family.

This protein is located at the 30S-50S ribosomal subunit interface and may play a role in the structure and function of the aminoacyl-tRNA binding site. The polypeptide is Large ribosomal subunit protein bL19 (Saccharophagus degradans (strain 2-40 / ATCC 43961 / DSM 17024)).